Here is a 561-residue protein sequence, read N- to C-terminus: DNA ligase (561 aa).

Residue E247 participates in ATP binding. Catalysis depends on K249, which acts as the N6-AMP-lysine intermediate. The ATP site is built by R254, R269, E299, F339, R414, and K420.

Belongs to the ATP-dependent DNA ligase family. In terms of assembly, monomer. Requires Mg(2+) as cofactor.

It carries out the reaction ATP + (deoxyribonucleotide)n-3'-hydroxyl + 5'-phospho-(deoxyribonucleotide)m = (deoxyribonucleotide)n+m + AMP + diphosphate.. In terms of biological role, DNA ligase that seals nicks in double-stranded DNA during DNA replication, DNA recombination and DNA repair. In Pyrococcus furiosus (strain ATCC 43587 / DSM 3638 / JCM 8422 / Vc1), this protein is DNA ligase.